The sequence spans 237 residues: Leucyl/phenylalanyl-tRNA--protein transferase (237 aa).

It belongs to the L/F-transferase family.

Its subcellular location is the cytoplasm. It catalyses the reaction N-terminal L-lysyl-[protein] + L-leucyl-tRNA(Leu) = N-terminal L-leucyl-L-lysyl-[protein] + tRNA(Leu) + H(+). The catalysed reaction is N-terminal L-arginyl-[protein] + L-leucyl-tRNA(Leu) = N-terminal L-leucyl-L-arginyl-[protein] + tRNA(Leu) + H(+). It carries out the reaction L-phenylalanyl-tRNA(Phe) + an N-terminal L-alpha-aminoacyl-[protein] = an N-terminal L-phenylalanyl-L-alpha-aminoacyl-[protein] + tRNA(Phe). Its function is as follows. Functions in the N-end rule pathway of protein degradation where it conjugates Leu, Phe and, less efficiently, Met from aminoacyl-tRNAs to the N-termini of proteins containing an N-terminal arginine or lysine. This chain is Leucyl/phenylalanyl-tRNA--protein transferase (aat), found in Vibrio vulnificus (strain CMCP6).